A 124-amino-acid polypeptide reads, in one-letter code: UPF0102 protein HCH_05895 (124 aa).

Belongs to the UPF0102 family.

The protein is UPF0102 protein HCH_05895 of Hahella chejuensis (strain KCTC 2396).